We begin with the raw amino-acid sequence, 183 residues long: MMGKQLTAQVPAEPVVLGKMGSSYGIRGWLRVFSSTEDAESIFDYQPWFIQKADQWQQVQLESWKHHNQDLIIKLKGVDDRDAANLLTNCEIVVDSSQLPALEEGDYYWKDLMGCQVVTAEGYDLGKVIDMMETGSNDVLVIKANLKDAFGIKERLVPFLDGQVIKKVDLATRTIEVDWDPGF.

Residues 104–183 (EGDYYWKDLM…TIEVDWDPGF (80 aa)) enclose the PRC barrel domain.

It belongs to the RimM family. In terms of assembly, binds ribosomal protein uS19.

The protein localises to the cytoplasm. Functionally, an accessory protein needed during the final step in the assembly of 30S ribosomal subunit, possibly for assembly of the head region. Essential for efficient processing of 16S rRNA. May be needed both before and after RbfA during the maturation of 16S rRNA. It has affinity for free ribosomal 30S subunits but not for 70S ribosomes. In Salmonella arizonae (strain ATCC BAA-731 / CDC346-86 / RSK2980), this protein is Ribosome maturation factor RimM.